Consider the following 788-residue polypeptide: Cap-specific mRNA (nucleoside-2'-O-)-methyltransferase 1 (788 aa).

The G-patch domain maps to 25-71 (YSNKAMEMMKKMGYENDKGLGKSNQGRLEPIIAVQQDGRRGFGLKLD). Residues 143–147 (KTVFD) and Arg158 each bind substrate. Positions 171-384 (IFLNRAAVKM…ERYLVCKYKR (214 aa)) constitute a RrmJ-type SAM-dependent 2'-O-MTase domain. An S-adenosyl-L-methionine-binding site is contributed by Asn174. Residue Lys179 is part of the active site. An S-adenosyl-L-methionine-binding site is contributed by 215–221 (CAGPGGF). Asp298 is a catalytic residue. Substrate is bound at residue 308-310 (NIQ). The Proton acceptor role is filled by Lys338. A substrate-binding site is contributed by Asn373.

In terms of assembly, interacts (via C-terminus) with r2d2 (via C-terminus).

The protein resides in the nucleus. It localises to the cytoplasm. The enzyme catalyses a 5'-end (N(7)-methyl 5'-triphosphoguanosine)-ribonucleoside in mRNA + S-adenosyl-L-methionine = a 5'-end (N(7)-methyl 5'-triphosphoguanosine)-(2'-O-methyl-ribonucleoside) in mRNA + S-adenosyl-L-homocysteine + H(+). S-adenosyl-L-methionine-dependent methyltransferase that mediates mRNA cap1 2'-O-ribose methylation to the 5'-cap structure of mRNAs. Methylates the ribose of the first nucleotide of a m(7)GpppG-capped mRNA to produce m(7)GpppNmp (cap1). Positively regulates the Ago2-dependent small RNA pathway, with roles in both siRNA biogenesis and RISC assembly. Involved in facilitating conversion of pre-RISC into holo-RISC, possibly by promoting the unwinding of Ago2-bound siRNA duplexes and thus the retention of the guide strand in holo-RISC. The sequence is that of Cap-specific mRNA (nucleoside-2'-O-)-methyltransferase 1 from Drosophila melanogaster (Fruit fly).